We begin with the raw amino-acid sequence, 270 residues long: MNLPNRGEGNRNGRVGKNFGRALNYHRKALVQQHVADELAERLVDFPLPERPRVLEIGCGTGFLSRHLMRQWPGGSFLFTDISAPMLVRCQSHLSDLPGQRQFMVMDGEHCAVRGPFDLVVSSMAMQWFGDLPGALQGLSSLLKTNGMLAFATLGDETFREWRGVCAQYGSPFGRPDYPDVAQLQEMWPSGGEGDVEEDHIPVAHSSGHGFLRALREVGAHQPSGQHRPVSAALMRRMLQATRGGQHGFTVTYHVLYGFYTRSFDDRPIH.

The protein belongs to the methyltransferase superfamily.

The enzyme catalyses malonyl-[ACP] + S-adenosyl-L-methionine = malonyl-[ACP] methyl ester + S-adenosyl-L-homocysteine. It functions in the pathway cofactor biosynthesis; biotin biosynthesis. Its function is as follows. Converts the free carboxyl group of a malonyl-thioester to its methyl ester by transfer of a methyl group from S-adenosyl-L-methionine (SAM). It allows to synthesize pimeloyl-ACP via the fatty acid synthetic pathway. In Magnetococcus marinus (strain ATCC BAA-1437 / JCM 17883 / MC-1), this protein is Malonyl-[acyl-carrier protein] O-methyltransferase.